The following is a 278-amino-acid chain: HTH-type transcriptional regulator HdfR (278 aa).

The HTH lysR-type domain occupies 1–58 (MDTELLKTFLEVSRTRHFGRAAEALYLTQSAVSFRIRQLENQLGVNLFTRHRNNIRLT). Positions 18-37 (FGRAAEALYLTQSAVSFRIR) form a DNA-binding region, H-T-H motif.

The protein belongs to the LysR transcriptional regulatory family.

Negatively regulates the transcription of the flagellar master operon flhDC by binding to the upstream region of the operon. The polypeptide is HTH-type transcriptional regulator HdfR (Salmonella agona (strain SL483)).